The primary structure comprises 475 residues: Glutamyl-tRNA(Gln) amidotransferase subunit A (475 aa).

Catalysis depends on charge relay system residues lysine 76 and serine 151. Serine 175 serves as the catalytic Acyl-ester intermediate.

The protein belongs to the amidase family. GatA subfamily. In terms of assembly, heterotrimer of A, B and C subunits.

The catalysed reaction is L-glutamyl-tRNA(Gln) + L-glutamine + ATP + H2O = L-glutaminyl-tRNA(Gln) + L-glutamate + ADP + phosphate + H(+). Functionally, allows the formation of correctly charged Gln-tRNA(Gln) through the transamidation of misacylated Glu-tRNA(Gln) in organisms which lack glutaminyl-tRNA synthetase. The reaction takes place in the presence of glutamine and ATP through an activated gamma-phospho-Glu-tRNA(Gln). This Pelodictyon phaeoclathratiforme (strain DSM 5477 / BU-1) protein is Glutamyl-tRNA(Gln) amidotransferase subunit A.